Consider the following 61-residue polypeptide: Temporin-MT3 (61 aa).

Positions 1–22 (MFTLKKPLLLLFFLGTINLSLC) are cleaved as a signal peptide. The propeptide at 23–44 (EQERNAEEERRDEPDERNAEVE) is removed in mature form. Leu59 is subject to Leucine amide.

It belongs to the frog skin active peptide (FSAP) family. Temporin subfamily. Expressed by the skin glands.

Its subcellular location is the secreted. Functionally, antimicrobial peptide. In Amolops mantzorum (Sichuan torrent frog), this protein is Temporin-MT3.